Reading from the N-terminus, the 388-residue chain is Carbohydrate sulfotransferase 4 (388 aa).

Residues 1–7 (MMLLKKG) lie on the Cytoplasmic side of the membrane. Residues 8-28 (RLLMFLGSQVIVVALFIHMSV) form a helical; Signal-anchor for type II membrane protein membrane-spanning segment. At 29–388 (HRHLSQREES…HILGQVFREG (360 aa)) the chain is on the lumenal side. 3'-phosphoadenylyl sulfate contacts are provided by residues 50–56 (WRSGSSF) and 204–212 (RDPRAVFRS). N-linked (GlcNAc...) asparagine glycans are attached at residues asparagine 307, asparagine 328, and asparagine 369.

Belongs to the sulfotransferase 1 family. Gal/GlcNAc/GalNAc subfamily. Monomer. Specifically expressed in high endothelial venules (HEV) of peripheral lymph nodes.

Its subcellular location is the golgi apparatus membrane. It catalyses the reaction 3-O-{N-acetyl-beta-D-glucosaminyl-(1-&gt;3)-beta-D-galactosyl-(1-&gt;3)-N-acetyl-alpha-D-galactosaminyl}-L-threonyl-[protein] + 3'-phosphoadenylyl sulfate = 3-O-{6-O-sulfo-N-acetyl-beta-D-glucosaminyl-(1-&gt;3)-beta-D-galactosyl-(1-&gt;3)-N-acetyl-alpha-D-galactosaminyl}-L-threonyl-[protein] + adenosine 3',5'-bisphosphate + H(+). It carries out the reaction 3-O-{N-acetyl-beta-D-glucosaminyl-(1-&gt;3)-beta-D-galactosyl-(1-&gt;3)-N-acetyl-alpha-D-galactosaminyl}-L-seryl-[protein] + 3'-phosphoadenylyl sulfate = 3-O-{6-O-sulfo-N-acetyl-beta-D-glucosaminyl-(1-&gt;3)-beta-D-galactosyl-(1-&gt;3)-N-acetyl-alpha-D-galactosaminyl}-L-seryl-[protein] + adenosine 3',5'-bisphosphate + H(+). The catalysed reaction is a 3-O-{beta-D-galactosyl-(1-&gt;3)-[N-acetyl-beta-D-glucosaminyl-(1-&gt;6)]-N-acetyl-alpha-D-galactosaminyl}-L-threonyl-[protein] + 3'-phosphoadenylyl sulfate = 3-O-{beta-D-galactosyl-(1-&gt;3)-[6-O-sulfo-N-acetyl-beta-D-glucosaminyl-(1-&gt;6)]-N-acetyl-alpha-D-galactosaminyl}-L-threonyl-[protein] + adenosine 3',5'-bisphosphate + H(+). The enzyme catalyses 3-O-{beta-D-galactosyl-(1-&gt;3)-[N-acetyl-beta-D-glucosaminyl-(1-&gt;6)]-N-acetyl-alpha-D-galactosaminyl}-L-seryl-[protein] + 3'-phosphoadenylyl sulfate = 3-O-{beta-D-galactosyl-(1-&gt;3)-[6-O-sulfo-N-acetyl-beta-D-glucosaminyl-(1-&gt;6)]-N-acetyl-alpha-D-galactosaminyl}-L-seryl-[protein] + adenosine 3',5'-bisphosphate + H(+). Its pathway is protein modification; carbohydrate sulfation. In terms of biological role, sulfotransferase involved in SELL/L-selectin ligand biosynthesis pathway. Catalyzes the transfer of the sulfate group from 3'-phospho-5'-adenylyl sulfate (PAPS) onto the hydroxyl group at C-6 position of the non-reducing N-acetylglucosamine (GlcNAc) residue within O-linked mucin-type glycans. Contributes to generate sialyl 6-sulfo Lewis X determinant (also known as MECA-79 epitope) for SELL recognition, a prerequisite for continuous lymphocyte homing into peripheral lymph nodes and antigen immune surveillance. Transfers the sulfate group primarily on core 2 GlcNAcbeta1-6(Galbeta1-3)GalNAcalphaSer/Thr and extended core 1 GlcNAcbeta1-3Galbeta1-3GalNAcalphaSer/Thr based O-linked glycans on CD34 and GLYCAM1 peripheral node addressins (PNAds) expressed on the lumenal side of high endothelial venules (HEVs). The recognition of PNAds by SELL initiates a multistep process comprising tethering and rolling of blood lymphocytes on HEVs against the blood flow, followed by chemokine signaling, integrin-mediated lymphocyte adhesion onto endothelial cells and lymphocyte transendothelial migration. Modulates rolling velocity and differential T and B lymphocyte recruitment into peripheral lymph nodes, with a major role in B lymphocyte homing. Might be redundant in sulfation of MADCAM1 and lymphocyte trafficking to mesenteric lymph nodes. Can also sulfonate core 3 GlcNAcbeta1-3GalNAc-R based glycans as well as GlcNAcbeta1-3Galbeta1-Glc, GlcNAcbeta1-6ManOMe and GlcNAcbeta1-2Man oligosaccharides, which might be ectopically expressed during tumorigenesis. The protein is Carbohydrate sulfotransferase 4 (Chst4) of Mus musculus (Mouse).